The sequence spans 675 residues: Heat shock 70 kDa protein, mitochondrial (675 aa).

The transit peptide at Met-1–Asn-51 directs the protein to the mitochondrion. Residues Val-638–Lys-675 form a disordered region. Residues Gly-648–Asp-663 are compositionally biased toward gly residues. A compositionally biased stretch (acidic residues) spans Pro-666 to Lys-675.

The protein belongs to the heat shock protein 70 family.

It localises to the mitochondrion. In Phaseolus vulgaris (Kidney bean), this protein is Heat shock 70 kDa protein, mitochondrial.